Consider the following 208-residue polypeptide: Protein-L-isoaspartate O-methyltransferase (208 aa).

The active site involves Ser-59.

It belongs to the methyltransferase superfamily. L-isoaspartyl/D-aspartyl protein methyltransferase family.

The protein localises to the cytoplasm. It carries out the reaction [protein]-L-isoaspartate + S-adenosyl-L-methionine = [protein]-L-isoaspartate alpha-methyl ester + S-adenosyl-L-homocysteine. Functionally, catalyzes the methyl esterification of L-isoaspartyl residues in peptides and proteins that result from spontaneous decomposition of normal L-aspartyl and L-asparaginyl residues. It plays a role in the repair and/or degradation of damaged proteins. This is Protein-L-isoaspartate O-methyltransferase from Yersinia pseudotuberculosis serotype O:1b (strain IP 31758).